The following is a 568-amino-acid chain: DNA ligase (568 aa).

Glutamate 249 is an ATP binding site. The N6-AMP-lysine intermediate role is filled by lysine 251. ATP-binding residues include arginine 256, arginine 271, glutamate 301, phenylalanine 342, arginine 418, and lysine 424.

Belongs to the ATP-dependent DNA ligase family. It depends on Mg(2+) as a cofactor.

The enzyme catalyses ATP + (deoxyribonucleotide)n-3'-hydroxyl + 5'-phospho-(deoxyribonucleotide)m = (deoxyribonucleotide)n+m + AMP + diphosphate.. Its function is as follows. DNA ligase that seals nicks in double-stranded DNA during DNA replication, DNA recombination and DNA repair. This chain is DNA ligase, found in Methanocella arvoryzae (strain DSM 22066 / NBRC 105507 / MRE50).